The chain runs to 562 residues: NRAMP-like transporter smf-1 (562 aa).

Over 1–55 (MASSNNDGPIEPEAEPWRITQNDHLEQDLLEEDAESQERVDIPVDDVEKAFSFKK) the chain is Cytoplasmic. The helical transmembrane segment at 56–76 (LWAFTGPGFLMSIAYLDPGNI) threads the bilayer. Residues 77 to 83 (ESDLQSG) lie on the Extracellular side of the membrane. A helical transmembrane segment spans residues 84–104 (AQAAYKLLWVLLSAHIIGMLL). Over 105 to 140 (QRMSARLGVVSGKHMAEVAYQFYPRLPRIILWLMIE) the chain is Cytoplasmic. The helical transmembrane segment at 141–161 (IAIVCSDMQEVIGTAIAIFLL) threads the bilayer. Residues 162–164 (SKG) lie on the Extracellular side of the membrane. Residues 165–185 (FVPLYVGVFITILDTFTFLLI) traverse the membrane as a helical segment. The Cytoplasmic portion of the chain corresponds to 186–194 (DRYGIRKLE). A helical transmembrane segment spans residues 195–215 (LIFGFLILTMTVSFGYEFVVV). Residues 216 to 241 (KPPIGEVISGMVVPWCAGCGKGEFMQ) are Extracellular-facing. The helical transmembrane segment at 242–262 (AISVVGAVIMPHNLYLHSALV) threads the bilayer. At 263–287 (KSRRVDRKDRRRVAEANKYFTLESA) the chain is on the cytoplasmic side. The chain crosses the membrane as a helical span at residues 288-308 (IALFLSFFINLFVVAVFAHGL). The Extracellular portion of the chain corresponds to 309–347 (YQKTNADVREMCIARHDIPDADIFPNNTEPVEVDIYKGG). A glycan (N-linked (GlcNAc...) asparagine) is linked at N334. A helical transmembrane segment spans residues 348-368 (IYLGCQFGAIAMFIWGIGIFA). Topologically, residues 369–398 (AGQSSTMTGTYTGQFVMEGFVKIEWPKWKR) are cytoplasmic. The chain crosses the membrane as a helical span at residues 399-419 (VLITRAIAITPTLVLTFYSQG). Topologically, residues 420–428 (VQNLTGMND) are extracellular. A glycan (N-linked (GlcNAc...) asparagine) is linked at N422. The helical transmembrane segment at 429-449 (FLNCVQMIQLPFALIPIITFT) threads the bilayer. Topologically, residues 450-462 (SSRKIMHDFRSSK) are cytoplasmic. Residues 463–483 (VFQIFALITSALILSINVYFI) traverse the membrane as a helical segment. Topologically, residues 484–496 (SDYVFSRLGSEWY) are extracellular. A helical transmembrane segment spans residues 497-517 (IIMVLAPITFAYVLFVLYLAL). Over 518–562 (YCLVSCEIIPDTVSIRGFSFNKSYENDAPWLAVDSSAVHDNAGYQ) the chain is Cytoplasmic.

It belongs to the NRAMP family. In terms of tissue distribution, expressed in dopaminergic neurons (at protein level). Expressed predominantly in anterior and posterior intestine, rectal gland cell, H-shaped excretory cell, vulva cells, proximal uterus and spermatheca in adults. Weakly expressed in hyp7 hypodermis, pharyngeal muscles and some anterior sensory, ring and posterior head neurons in adults. Expressed in the anchor cell at the larval stage.

It is found in the apical cell membrane. The protein resides in the cytoplasmic vesicle membrane. Its function is as follows. Probable divalent metal ion transporter which regulates Mn(2+) uptake. The protein is NRAMP-like transporter smf-1 (smf-1) of Caenorhabditis elegans.